Reading from the N-terminus, the 273-residue chain is Probable glycerophosphodiester phosphodiesterase GpdQ (273 aa).

Fe cation is bound by residues D8, H10, D50, N80, H154, H194, and H196.

Belongs to the cyclic nucleotide phosphodiesterase class-III family. It depends on Fe(2+) as a cofactor.

It catalyses the reaction a sn-glycero-3-phosphodiester + H2O = an alcohol + sn-glycerol 3-phosphate + H(+). It carries out the reaction sn-glycero-3-phosphoethanolamine + H2O = ethanolamine + sn-glycerol 3-phosphate + H(+). Its function is as follows. Catalyzes the hydrolysis of the 3'-5' phosphodiester bond of glycerophosphodiesters such as glycerophosphorylethanolamine (GPE), a typical phospholipid metabolite. The sequence is that of Probable glycerophosphodiester phosphodiesterase GpdQ from Arcobacter nitrofigilis (strain ATCC 33309 / DSM 7299 / CCUG 15893 / LMG 7604 / NCTC 12251 / CI) (Campylobacter nitrofigilis).